The chain runs to 148 residues: Glutaredoxin-C10 (148 aa).

The interval 16–55 is disordered; it reads TLDLTVHPPPPPPLPPPAPSTVSSSTASTSLSFDEEETSE. The segment covering 22–34 has biased composition (pro residues); that stretch reads HPPPPPPLPPPAP. Residues 35–47 show a composition bias toward low complexity; it reads STVSSSTASTSLS. Residues 55-147 enclose the Glutaredoxin domain; it reads ESKIGRLISE…PRLVEVGALW (93 aa). Residues C76 and C79 are joined by a disulfide bond.

It belongs to the glutaredoxin family. CC-type subfamily.

The protein localises to the cytoplasm. In terms of biological role, has a glutathione-disulfide oxidoreductase activity in the presence of NADPH and glutathione reductase. Reduces low molecular weight disulfides and proteins. In Arabidopsis thaliana (Mouse-ear cress), this protein is Glutaredoxin-C10 (GRXC10).